Reading from the N-terminus, the 878-residue chain is DNA mismatch repair protein MutS (878 aa).

618-625 lines the ATP pocket; it reads GPNMGGKS. Composition is skewed to basic and acidic residues over residues 800–811 and 863–878; these read LEEESSRQRAEP and GADKKARGDAVDARSR. 2 disordered regions span residues 800 to 842 and 859 to 878; these read LEEE…PDEL and SGEEGADKKARGDAVDARSR.

This sequence belongs to the DNA mismatch repair MutS family.

Its function is as follows. This protein is involved in the repair of mismatches in DNA. It is possible that it carries out the mismatch recognition step. This protein has a weak ATPase activity. In Alkalilimnicola ehrlichii (strain ATCC BAA-1101 / DSM 17681 / MLHE-1), this protein is DNA mismatch repair protein MutS.